The chain runs to 368 residues: MASDAQPSVDQPSAGTPGATGNSTGTTGTEIVFRDVTKIFKQGKKEIHALQDINTQIPAGSIVGIIGYSGAGKSTLVRQINGLDRPTSGQILLDGQDIVPLPESQMRKLRSDIGMIFQQFNLFSSRNVAGNVAYPLRLQGMPKQQREERVKELLEFVGLSDKGKAYPEQLSGGQKQRVGIARALATNPSLLLADEATSALDPSTTRDVLELLRKVNRELGITIVVITHEMEVVRSIADSVIVMESGRIVEQGSVYEVFSNPQTKTAANFVATSLRNTPDMVEAEALQSENGRLFTVTMAEGIGFFDAISKLSAAGVTVNIVHGGVTTLQNHSFGRLTLRLTAHSTDGEKAIEEFHSHMQDSTEIEEIR.

The span at 1-14 shows a compositional bias: polar residues; that stretch reads MASDAQPSVDQPSA. The disordered stretch occupies residues 1–27; the sequence is MASDAQPSVDQPSAGTPGATGNSTGTT. A compositionally biased stretch (low complexity) spans 15–27; that stretch reads GTPGATGNSTGTT. In terms of domain architecture, ABC transporter spans 31-270; that stretch reads IVFRDVTKIF…PQTKTAANFV (240 aa). Position 67–74 (67–74) interacts with ATP; it reads GYSGAGKS.

Belongs to the ABC transporter superfamily. Methionine importer (TC 3.A.1.24) family. As to quaternary structure, the complex is composed of two ATP-binding proteins (MetN), two transmembrane proteins (MetI) and a solute-binding protein (MetQ).

It localises to the cell membrane. The catalysed reaction is L-methionine(out) + ATP + H2O = L-methionine(in) + ADP + phosphate + H(+). The enzyme catalyses D-methionine(out) + ATP + H2O = D-methionine(in) + ADP + phosphate + H(+). Part of the ABC transporter complex MetNIQ involved in methionine import. Responsible for energy coupling to the transport system. This Corynebacterium jeikeium (strain K411) protein is Methionine import ATP-binding protein MetN.